The sequence spans 692 residues: Sodium- and chloride-dependent glycine transporter 1 (692 aa).

Residues 1-34 (MIGGDTRAASAHPGMASAQGPVATPSPEQPFPGT) form a disordered region. The Cytoplasmic portion of the chain corresponds to 1–94 (MIGGDTRAAS…TRGNWGNQIE (94 aa)). A run of 3 helical transmembrane segments spans residues 95–115 (FVLT…FPYL), 122–142 (GAFM…LFFM), and 174–194 (VSTY…YYFF). Topologically, residues 195–271 (SSMTHVLPWA…LSDDIGNFGE (77 aa)) are extracellular. 9 helical membrane passes run 272–292 (VRLP…LCLI), 301–321 (VVYF…VRGV), 346–366 (VWGD…GGLI), 393–413 (SVYA…HLGV), 436–456 (LLPI…LLGL), 492–512 (VAGF…WLLL), 516–536 (YAAS…IMYI), 556–576 (LFFQ…ILIF), and 596–616 (VAIG…YALF). The Cytoplasmic segment spans residues 617–692 (QLCRTDGDTL…GSSRFQDSRI (76 aa)). At T657 the chain carries Phosphothreonine. 2 positions are modified to phosphoserine: S659 and S684. An essential for interaction with EXOC1 region spans residues 681 to 692 (SNGSSRFQDSRI).

It belongs to the sodium:neurotransmitter symporter (SNF) (TC 2.A.22) family. SLC6A9 subfamily. In terms of assembly, interacts with EXOC1; interaction increases the transporter capacity of SLC6A9 probably by promoting its insertion into the cell membrane. Interacts with EXOC3 and EXOC4. As to expression, expressed in the brain (at protein level). At 11 dpc, expressed in the ventral part of the ventricular zone. At 15 dpc, also expressed in adjacent mantle tissue and the meninges. Strongly expressed in 12 dpc and 15 dpc liver. In terms of tissue distribution, expressed in the brain.

It is found in the cell membrane. The enzyme catalyses glycine(out) + chloride(out) + 2 Na(+)(out) = glycine(in) + chloride(in) + 2 Na(+)(in). Functionally, sodium- and chloride-dependent glycine transporter which is essential for regulating glycine concentrations at inhibitory glycinergic synapses. Its function is as follows. Sodium- and chloride-dependent glycine transporter. This is Sodium- and chloride-dependent glycine transporter 1 (Slc6a9) from Mus musculus (Mouse).